A 158-amino-acid polypeptide reads, in one-letter code: MKERYGTVYKGSQRLIDEESGEVIEVDKLYRKQTSGNFVKAYIVQLISMLDMIGGKKLKIVNYILDNVHLSNNTMIATTREIAKATGTSLQTVITTLKILEEGNIIKRKTGVLMLNPELLMRGDDQKQKYLLLEFGNFEQEANEKQENALSDYYSFKD.

The protein is Replication and maintenance protein (repL) of Staphylococcus aureus.